Consider the following 261-residue polypeptide: MPKRSEYRQGTPNWVDLQTTDQSAAKKFYTSLFGWGYDDNPVPGGGGVYSMATLNGEAVAAIAPMPPGAPEGMPPIWNTYIAVDDVDAVVDKVVPGGGQVMMPAFDIGDAGRMSFITDPTGAAVGLWQANRHIGATLVNETGTLIWNELLTDKPDLALAFYEAVVGLTHSSMEIAAGQNYRVLKAGDAEVGGCMEPPMPGVPNHWHVYFAVDDADATAAKAAAAGGQVIAEPADIPSVGRFAVLSDPQGAIFSVLKPAPQQ.

2 consecutive VOC domains span residues 11–129 (TPNW…LWQA) and 143–257 (TLIW…VLKP). Glyoxalase stretches follow at residues 13–123 (NWVD…TGAA) and 149–252 (LLTD…GAIF).

The polypeptide is Putative glyoxylase CFP32 (Mycobacterium bovis (strain ATCC BAA-935 / AF2122/97)).